A 111-amino-acid polypeptide reads, in one-letter code: UPF0125 protein SO_1475 (111 aa).

Residues 88 to 111 (VRRRRADKAKDEGRANKVTGGRVS) are disordered.

The protein belongs to the UPF0125 (RnfH) family.

The chain is UPF0125 protein SO_1475 from Shewanella oneidensis (strain ATCC 700550 / JCM 31522 / CIP 106686 / LMG 19005 / NCIMB 14063 / MR-1).